The primary structure comprises 78 residues: Protein SlyX homolog (78 aa).

This sequence belongs to the SlyX family.

This chain is Protein SlyX homolog, found in Xanthomonas euvesicatoria pv. vesicatoria (strain 85-10) (Xanthomonas campestris pv. vesicatoria).